Here is an 874-residue protein sequence, read N- to C-terminus: Dynein regulatory complex subunit 7 (874 aa).

Positions 1 to 20 (MEVLREKVEEEEEAEREEAA) are disordered. Coiled-coil stretches lie at residues 1-67 (MEVL…SAEL) and 257-297 (RFEQ…DALH). Acidic residues predominate over residues 386–400 (TEEDDSGINDEDDVE). The tract at residues 386–410 (TEEDDSGINDEDDVENLGKEDEDKS) is disordered. Positions 401–410 (NLGKEDEDKS) are enriched in basic and acidic residues.

Belongs to the DRC7 family. In terms of assembly, component of the nexin-dynein regulatory complex (N-DRC). Interacts with TCTE1/DRC5. Interacts with DRC3 and GAS8/DRC4. Expressed in the testis.

The protein resides in the cell projection. The protein localises to the cilium. It localises to the flagellum. Its subcellular location is the cytoplasm. It is found in the cytoskeleton. The protein resides in the cilium axoneme. The protein localises to the flagellum axoneme. Functionally, component of the nexin-dynein regulatory complex (N-DRC) a key regulator of ciliary/flagellar motility which maintains the alignment and integrity of the distal axoneme and regulates microtubule sliding in motile axonemes. Involved in the regulation of flagellar motility. Essential for male fertility, sperm head morphogenesis and sperm flagellum formation. This Pan troglodytes (Chimpanzee) protein is Dynein regulatory complex subunit 7 (DRC7).